We begin with the raw amino-acid sequence, 852 residues long: Lon protease homolog 2, peroxisomal (852 aa).

Ser-2 bears the N-acetylserine mark. A Lon N-terminal domain is found at Leu-13–Ile-222. Gly-375 to Thr-382 provides a ligand contact to ATP. In terms of domain architecture, Lon proteolytic spans Leu-651–Gly-837. Active-site residues include Ser-743 and Lys-786. The short motif at Ser-850–Leu-852 is the Microbody targeting signal element.

It belongs to the peptidase S16 family. Interacts with PEX5. Interacts with TYSND1. May interact with enzymes involved in beta-oxidation of fatty acids, including ACOX1/AOX.

It localises to the peroxisome matrix. The catalysed reaction is Hydrolysis of proteins in presence of ATP.. Functionally, ATP-dependent serine protease that mediates the selective degradation of misfolded and unassembled polypeptides in the peroxisomal matrix. Necessary for type 2 peroxisome targeting signal (PTS2)-containing protein processing and facilitates peroxisome matrix protein import. May indirectly regulate peroxisomal fatty acid beta-oxidation through degradation of the self-processed forms of TYSND1. The polypeptide is Lon protease homolog 2, peroxisomal (Lonp2) (Rattus norvegicus (Rat)).